Consider the following 1398-residue polypeptide: MNKKGLTVLFIAIMLLSVVPVHFVSAGTPPVSSENSTTSILPNQQVVTKEVSQAALNAIMKGQPNMVLIIKTKEGKLEEAKTELEKLGAEILDENRVLNMLLVKIKPEKVKELNYISSLEKAWLNREVKLSPPIVEKDVKTKEPSLEPKMYNSTWVINALQFIQEFGYDGSGVVVAVLDTGVDPNHPFLSITPDGRRKIIEWKDFTDEGFVDTSFSFSKVVNGTLIINTTFQVASGLTLNESTGLMEYVVKTVYVSNVTIGNITSANGIYHFGLLPERYFDLNFDGDQEDFYPVLLVNSTGNGYDIAYVDTDLDYDFTDEVPLGQYNVTYDVAVFSYYYGPLNYVLAEIDPNGEYAVFGWDGHGHGTHVAGTVAGYDSNNDAWDWLSMYSGEWEVFSRLYGWDYTNVTTDTVQGVAPGAQIMAIRVLRSDGRGSMWDIIEGMTYAATHGADVISMSLGGNAPYLDGTDPESVAVDELTEKYGVVFVIAAGNEGPGINIVGSPGVATKAITVGAAAVPINVGVYVSQALGYPDYYGFYYFPAYTNVRIAFFSSRGPRIDGEIKPNVVAPGYGIYSSLPMWIGGADFMSGTSMATPHVSGVVALLISGAKAEGIYYNPDIIKKVLESGATWLEGDPYTGQKYTELDQGHGLVNVTKSWEILKAINGTTLPIVDHWADKSYSDFAEYLGVDVIRGLYARNSIPDIVEWHIKYVGDTEYRTFEIYATEPWIKPFVSGSVILENNTEFVLRVKYDVEGLEPGLYVGRIIIDDPTTPVIEDEILNTIVIPEKFTPENNYTLTWYDINGPEMVTHHFFTVPEGVDVLYAMTTYWDYGLYRPDGMFVFPYQLDYLPAAVSNPMPGNWELVWTGFNFAPLYESGFLVRIYGVEITPSVWYINRTYLDTNTEFSIEFNITNIYAPINATLIPIGLGTYNASVESVGDGEFFIKGIEVPEGTAELKIRIGNPSVPNSDLDLYLYDSKGNLVALDGNPTAEEEVVVEYPKPGVYSIVVHGYSVRDENGNPTTTTFDLVVQMTLDNGNIKLDKDSIILGSNESVVVTANITIDRDHPTGVYSGIIEIRDNEVYQDTNTSIAKIPITLVIDKADFAVGLTPAEGVLGEARNYTLIVKHALTLEPVPNATVIIGNYTYLTDENGTVTFTYAPTKLGSDEITVIVKKENFNTLEKTFQITVSEPEITEEDINEPKLAMSSPEANATIVSVEMESEGGVKKTVTVEITINGTANETATIVVPVPKKAENIEVSGDHVISYSIEEGEYAKYVIITVKFASPVTVTVTYTIYAGPRVSILTLNFLGYSWYRLYSQKFDELYQKALELGVDNETLALALSYHEKAKEYYEKALELSEGNIIQYLGDIRLLPPLRQAYINEMKAVKILEKAIEELEGEE.

Residues 1-26 form the signal peptide; that stretch reads MNKKGLTVLFIAIMLLSVVPVHFVSA. A propeptide spanning residues 27–149 is cleaved from the precursor; it reads GTPPVSSENS…KTKEPSLEPK (123 aa). The N-linked (GlcNAc...) asparagine glycan is linked to Asn-152. The Peptidase S8 domain maps to 154–656; sequence TWVINALQFI…HGLVNVTKSW (503 aa). Asp-179 serves as the catalytic Charge relay system. Asn-222, Asn-228, Asn-240, Asn-257, Asn-262, Asn-298, and Asn-327 each carry an N-linked (GlcNAc...) asparagine glycan. The active-site Charge relay system is the His-365. An N-linked (GlcNAc...) asparagine glycan is attached at Asn-406. Catalysis depends on Ser-590, which acts as the Charge relay system. 19 N-linked (GlcNAc...) asparagine glycosylation sites follow: Asn-651, Asn-663, Asn-739, Asn-792, Asn-893, Asn-908, Asn-917, Asn-929, Asn-1048, Asn-1056, Asn-1084, Asn-1117, Asn-1133, Asn-1140, Asn-1148, Asn-1208, Asn-1233, Asn-1237, and Asn-1332.

The protein belongs to the peptidase S8 family. In terms of processing, LWM pyrolysin seems to be produced by autoproteolytic activation of HMW pyrolysin. Post-translationally, glycosylated.

The protein localises to the cell envelope. Functionally, has endopeptidase activity toward caseins, casein fragments including alpha-S1-casein and synthetic peptides. The chain is Pyrolysin (pls) from Pyrococcus furiosus (strain ATCC 43587 / DSM 3638 / JCM 8422 / Vc1).